Consider the following 630-residue polypeptide: tRNA uridine 5-carboxymethylaminomethyl modification enzyme MnmG (630 aa).

FAD contacts are provided by residues 14-19, Val126, and Ser181; that span reads GAGHAG. 273–287 contributes to the NAD(+) binding site; that stretch reads GPRYCPSIEDKVVRF. Residue Gln370 participates in FAD binding.

This sequence belongs to the MnmG family. Homodimer. Heterotetramer of two MnmE and two MnmG subunits. FAD serves as cofactor.

The protein localises to the cytoplasm. Functionally, NAD-binding protein involved in the addition of a carboxymethylaminomethyl (cmnm) group at the wobble position (U34) of certain tRNAs, forming tRNA-cmnm(5)s(2)U34. This Alkaliphilus metalliredigens (strain QYMF) protein is tRNA uridine 5-carboxymethylaminomethyl modification enzyme MnmG.